The sequence spans 182 residues: Glycoprotein Q2 (182 aa).

A signal peptide spans 1–20; the sequence is MHFVAVYILTHFHAYPGVAA. N-linked (GlcNAc...) asparagine; by host glycans are attached at residues N74 and N110.

Interacts with isoform gQ2. The heterodimer gQ1-gQ2 associates with the glycoprotein complex gH-gL to form a tetrameric complex. The gH/gL/gQ1/gQ2 complex binds to host TNFRSF4. Glycosylated by host.

It is found in the virion membrane. Its subcellular location is the host endoplasmic reticulum-Golgi intermediate compartment. Its function is as follows. Plays a role in virus entry by participating in host receptor binding at the cell surface. The protein is Glycoprotein Q2 of Human herpesvirus 6B (strain Z29) (HHV-6 variant B).